Reading from the N-terminus, the 844-residue chain is 3',5'-cyclic-AMP phosphodiesterase 4A (844 aa).

The tract at residues 1–124 (MEPPAAPSER…RSPLDSQASP (124 aa)) is disordered. Ser-13 bears the Phosphoserine mark. A compositionally biased stretch (low complexity) spans 36 to 46 (QPRTPIRIQQR). Basic and acidic residues predominate over residues 51-78 (SAERSETERSPHRPIERADAVDTGDRPG). The span at 82-91 (TRMSWPSSFH) shows a compositional bias: polar residues. Ser-147 carries the post-translational modification Phosphoserine; by MAPKAPK2. Ser-152, Ser-160, and Ser-204 each carry phosphoserine. The tract at residues 296–317 (PSPTPRQRAFQQPPPSVLRQSQ) is disordered. Phosphoserine is present on Ser-333. The region spanning 343 to 672 (VKTDQEDLLA…DWYHSAIRQS (330 aa)) is the PDEase domain. Lys-344 participates in a covalent cross-link: Glycyl lysine isopeptide (Lys-Gly) (interchain with G-Cter in SUMO). Catalysis depends on His-419, which acts as the Proton donor. His-419 provides a ligand contact to 3',5'-cyclic AMP. AMP contacts are provided by His-419 and His-423. Positions 423, 459, 460, and 577 each coordinate Zn(2+). Positions 460, 577, 628, and 631 each coordinate AMP. Asp-460 contributes to the Mg(2+) binding site. A Mn(2+)-binding site is contributed by Asp-460. Residues Gln-628 and Phe-631 each coordinate 3',5'-cyclic AMP. Disordered regions lie at residues 668–690 (AIRQ…PSLP) and 818–844 (SACS…GDPA). Phosphoserine occurs at positions 672 and 674. Over residues 820–830 (CSGTSGDNSAI) the composition is skewed to polar residues.

Belongs to the cyclic nucleotide phosphodiesterase family. PDE4 subfamily. Interacts with LYN (via SH3 domain). Interacts with ARRB2. Zn(2+) serves as cofactor. Mg(2+) is required as a cofactor. The cofactor is Mn(2+). In terms of processing, phosphorylated by MAPKAPK2 at Ser-147; it counteracts PKA-induced activation of PDE4A and modulates intracellular cAMP levels. Likely involved in cellular desensitization to cAMP signaling. Proteolytically cleaved by CASP3. In terms of tissue distribution, isoform 2 is testis specific.

It is found in the cytoplasm. It localises to the cytosol. The protein resides in the membrane. The catalysed reaction is 3',5'-cyclic AMP + H2O = AMP + H(+). It functions in the pathway purine metabolism; 3',5'-cyclic AMP degradation; AMP from 3',5'-cyclic AMP: step 1/1. Its activity is regulated as follows. Inhibited by rolipram. In terms of biological role, hydrolyzes the second messenger 3',5'-cyclic AMP (cAMP), which is a key regulator of many important physiological processes. Functionally, efficiently hydrolyzes cAMP. The sequence is that of 3',5'-cyclic-AMP phosphodiesterase 4A (Pde4a) from Rattus norvegicus (Rat).